The primary structure comprises 539 residues: Sporozoite-associated protein (539 aa).

Residues asparagine 31, asparagine 90, asparagine 102, asparagine 149, and asparagine 167 are each glycosylated (N-linked (GlcNAc...) asparagine). Residues 126–153 (LTQSPPPAAAPQSPSPRAILSPRNVSKT) are disordered. Over residues 192–215 (VVAEKSNTPTTPKTTPNGKWTGKN) the composition is skewed to low complexity. Positions 192–231 (VVAEKSNTPTTPKTTPNGKWTGKNANATIETSNTDHTPPS) are disordered. Polar residues predominate over residues 216–228 (ANATIETSNTDHT). N-linked (GlcNAc...) asparagine glycosylation is found at asparagine 217, asparagine 271, and asparagine 288. Residues 303-355 (TLISRAQDDKPGTKGGSDETSSSTAASNERQPMFPNDNDDDDIDQTYCPGVES) form a disordered region. Residues 320–332 (DETSSSTAASNER) show a composition bias toward polar residues. 2 N-linked (GlcNAc...) asparagine glycosylation sites follow: asparagine 427 and asparagine 503.

In terms of tissue distribution, saliva (at protein level). Female salivary gland. Female midgut.

The protein localises to the secreted. Its function is as follows. Binds heparan sulfate proteoglycans present on the mammalian cell surface. Modulates host immune responses at the site of inoculation via decreasing the expression of TNF-alpha/TNF, IL-1beta/IL1B, IFN-gamma/IFNG, IL4, MMP9, TGF-beta and ICAM1. Functionally, (Microbial infection) Interacts with the surface of Plasmodium berghei sporozoites. Promotes Plasmodium berghei transmission to the mouse host. Does not affect Plasmodium berghei sporozoite viability. (Microbial infection) Interacts with the surface of Plasmodium falciparum sporozoites. The protein is Sporozoite-associated protein of Anopheles gambiae (African malaria mosquito).